We begin with the raw amino-acid sequence, 237 residues long: Small ribosomal subunit protein uS3 (237 aa).

Positions 39–107 (IRAYLMEELK…ETHLNIVEVR (69 aa)) constitute a KH type-2 domain. Residues 213-237 (MASERRATESDNQGGSGRERRRENA) form a disordered region.

It belongs to the universal ribosomal protein uS3 family. Part of the 30S ribosomal subunit. Forms a tight complex with proteins S10 and S14.

In terms of biological role, binds the lower part of the 30S subunit head. Binds mRNA in the 70S ribosome, positioning it for translation. This Rhizobium meliloti (strain 1021) (Ensifer meliloti) protein is Small ribosomal subunit protein uS3.